The following is a 357-amino-acid chain: Elongation factor Ts (357 aa).

Positions 82-85 (TDFV) are involved in Mg(2+) ion dislocation from EF-Tu.

The protein belongs to the EF-Ts family.

It is found in the cytoplasm. Associates with the EF-Tu.GDP complex and induces the exchange of GDP to GTP. It remains bound to the aminoacyl-tRNA.EF-Tu.GTP complex up to the GTP hydrolysis stage on the ribosome. This is Elongation factor Ts from Campylobacter jejuni subsp. jejuni serotype O:2 (strain ATCC 700819 / NCTC 11168).